The sequence spans 189 residues: GTP cyclohydrolase 1 (189 aa).

Positions 78, 81, and 150 each coordinate Zn(2+).

Belongs to the GTP cyclohydrolase I family. Toroid-shaped homodecamer, composed of two pentamers of five dimers.

The catalysed reaction is GTP + H2O = 7,8-dihydroneopterin 3'-triphosphate + formate + H(+). Its pathway is cofactor biosynthesis; 7,8-dihydroneopterin triphosphate biosynthesis; 7,8-dihydroneopterin triphosphate from GTP: step 1/1. This Listeria welshimeri serovar 6b (strain ATCC 35897 / DSM 20650 / CCUG 15529 / CIP 8149 / NCTC 11857 / SLCC 5334 / V8) protein is GTP cyclohydrolase 1.